Here is a 39-residue protein sequence, read N- to C-terminus: Photosystem II reaction center protein L (39 aa).

The chain crosses the membrane as a helical span at residues Ser18–Phe38.

It belongs to the PsbL family. PSII is composed of 1 copy each of membrane proteins PsbA, PsbB, PsbC, PsbD, PsbE, PsbF, PsbH, PsbI, PsbJ, PsbK, PsbL, PsbM, PsbT, PsbX, PsbY, Psb30/Ycf12, peripheral proteins PsbO, CyanoQ (PsbQ), PsbU, PsbV and a large number of cofactors. It forms dimeric complexes.

It localises to the cellular thylakoid membrane. Functionally, one of the components of the core complex of photosystem II (PSII). PSII is a light-driven water:plastoquinone oxidoreductase that uses light energy to abstract electrons from H(2)O, generating O(2) and a proton gradient subsequently used for ATP formation. It consists of a core antenna complex that captures photons, and an electron transfer chain that converts photonic excitation into a charge separation. This subunit is found at the monomer-monomer interface and is required for correct PSII assembly and/or dimerization. This chain is Photosystem II reaction center protein L, found in Prochlorococcus marinus (strain MIT 9211).